A 122-amino-acid chain; its full sequence is Probable DNA-directed RNA polymerase II subunit RPB11 (122 aa).

It belongs to the archaeal Rpo11/eukaryotic RPB11/RPC19 RNA polymerase subunit family. As to quaternary structure, component of the RNA polymerase II (Pol II) complex consisting of 12 subunits.

Its subcellular location is the nucleus. DNA-dependent RNA polymerase catalyzes the transcription of DNA into RNA using the four ribonucleoside triphosphates as substrates. Component of RNA polymerase II which synthesizes mRNA precursors and many functional non-coding RNAs. Pol II is the central component of the basal RNA polymerase II transcription machinery. It is composed of mobile elements that move relative to each other. RPB11 is part of the core element with the central large cleft. The chain is Probable DNA-directed RNA polymerase II subunit RPB11 (rpb-11) from Caenorhabditis elegans.